We begin with the raw amino-acid sequence, 81 residues long: Photosystem I iron-sulfur center (81 aa).

4Fe-4S ferredoxin-type domains lie at 2–31 and 39–68; these read AHSV…MIPW and IASA…VRVY. 8 residues coordinate [4Fe-4S] cluster: cysteine 11, cysteine 14, cysteine 17, cysteine 21, cysteine 48, cysteine 51, cysteine 54, and cysteine 58.

In terms of assembly, the eukaryotic PSI reaction center is composed of at least 11 subunits. The cofactor is [4Fe-4S] cluster.

Its subcellular location is the plastid. The protein localises to the chloroplast thylakoid membrane. The enzyme catalyses reduced [plastocyanin] + hnu + oxidized [2Fe-2S]-[ferredoxin] = oxidized [plastocyanin] + reduced [2Fe-2S]-[ferredoxin]. Its function is as follows. Apoprotein for the two 4Fe-4S centers FA and FB of photosystem I (PSI); essential for photochemical activity. FB is the terminal electron acceptor of PSI, donating electrons to ferredoxin. The C-terminus interacts with PsaA/B/D and helps assemble the protein into the PSI complex. Required for binding of PsaD and PsaE to PSI. PSI is a plastocyanin-ferredoxin oxidoreductase, converting photonic excitation into a charge separation, which transfers an electron from the donor P700 chlorophyll pair to the spectroscopically characterized acceptors A0, A1, FX, FA and FB in turn. This chain is Photosystem I iron-sulfur center, found in Pinus thunbergii (Japanese black pine).